The chain runs to 156 residues: Small ribosomal subunit protein uS7 (156 aa).

This sequence belongs to the universal ribosomal protein uS7 family. As to quaternary structure, part of the 30S ribosomal subunit. Contacts proteins S9 and S11.

Its function is as follows. One of the primary rRNA binding proteins, it binds directly to 16S rRNA where it nucleates assembly of the head domain of the 30S subunit. Is located at the subunit interface close to the decoding center, probably blocks exit of the E-site tRNA. In Hahella chejuensis (strain KCTC 2396), this protein is Small ribosomal subunit protein uS7.